The sequence spans 205 residues: Ribosomal RNA small subunit methyltransferase G (205 aa).

S-adenosyl-L-methionine contacts are provided by residues G73, L78, 124–125 (VE), and R139.

It belongs to the methyltransferase superfamily. RNA methyltransferase RsmG family.

The protein resides in the cytoplasm. It carries out the reaction guanosine(527) in 16S rRNA + S-adenosyl-L-methionine = N(7)-methylguanosine(527) in 16S rRNA + S-adenosyl-L-homocysteine. Its function is as follows. Specifically methylates the N7 position of guanine in position 527 of 16S rRNA. In Erwinia tasmaniensis (strain DSM 17950 / CFBP 7177 / CIP 109463 / NCPPB 4357 / Et1/99), this protein is Ribosomal RNA small subunit methyltransferase G.